The following is a 190-amino-acid chain: Prostaglandin-H2 D-isomerase (190 aa).

Positions 1–22 (MATHHTLWMGLALLGVLGDLQA) are cleaved as a signal peptide. Asn51 carries an N-linked (GlcNAc...) asparagine glycan. The active-site Nucleophile is Cys65. Asn78 carries an N-linked (GlcNAc...) asparagine glycan. Cys89 and Cys186 are joined by a disulfide.

This sequence belongs to the calycin superfamily. Lipocalin family. In terms of assembly, monomer.

The protein localises to the rough endoplasmic reticulum. The protein resides in the nucleus membrane. Its subcellular location is the golgi apparatus. It localises to the cytoplasm. It is found in the perinuclear region. The protein localises to the secreted. It catalyses the reaction prostaglandin H2 = prostaglandin D2. Functionally, catalyzes the conversion of PGH2 to PGD2, a prostaglandin involved in smooth muscle contraction/relaxation and a potent inhibitor of platelet aggregation. Involved in a variety of CNS functions, such as sedation, NREM sleep and PGE2-induced allodynia, and may have an anti-apoptotic role in oligodendrocytes. Binds small non-substrate lipophilic molecules, including biliverdin, bilirubin, retinal, retinoic acid and thyroid hormone, and may act as a scavenger for harmful hydrophobic molecules and as a secretory retinoid and thyroid hormone transporter. Possibly involved in development and maintenance of the blood-brain, blood-retina, blood-aqueous humor and blood-testis barrier. It is likely to play important roles in both maturation and maintenance of the central nervous system and male reproductive system. Involved in PLA2G3-dependent maturation of mast cells. PLA2G3 is secreted by immature mast cells and acts on nearby fibroblasts upstream to PTDGS to synthesize PGD2, which in turn promotes mast cell maturation and degranulation via PTGDR. The chain is Prostaglandin-H2 D-isomerase (PTGDS) from Gorilla gorilla gorilla (Western lowland gorilla).